A 497-amino-acid polypeptide reads, in one-letter code: Glycerol kinase (497 aa).

Thr13 is a binding site for ADP. Thr13, Thr14, and Ser15 together coordinate ATP. Thr13 lines the sn-glycerol 3-phosphate pocket. Arg17 is an ADP binding site. 3 residues coordinate sn-glycerol 3-phosphate: Arg83, Glu84, and Tyr135. Glycerol contacts are provided by Arg83, Glu84, and Tyr135. His231 bears the Phosphohistidine; by HPr mark. Asp245 is a binding site for sn-glycerol 3-phosphate. 2 residues coordinate glycerol: Asp245 and Gln246. Residues Thr267 and Gly310 each coordinate ADP. Residues Thr267, Gly310, Gln314, and Gly411 each coordinate ATP. The ADP site is built by Gly411 and Asn415.

Belongs to the FGGY kinase family. In terms of assembly, homotetramer and homodimer (in equilibrium). The phosphoenolpyruvate-dependent sugar phosphotransferase system (PTS), including enzyme I, and histidine-containing protein (HPr) are required for the phosphorylation, which leads to the activation of the enzyme.

The catalysed reaction is glycerol + ATP = sn-glycerol 3-phosphate + ADP + H(+). The protein operates within polyol metabolism; glycerol degradation via glycerol kinase pathway; sn-glycerol 3-phosphate from glycerol: step 1/1. Activated by phosphorylation and inhibited by fructose 1,6-bisphosphate (FBP). Its function is as follows. Key enzyme in the regulation of glycerol uptake and metabolism. Catalyzes the phosphorylation of glycerol to yield sn-glycerol 3-phosphate. The polypeptide is Glycerol kinase (Listeria innocua serovar 6a (strain ATCC BAA-680 / CLIP 11262)).